The following is a 627-amino-acid chain: Membrane protein insertase YidC (627 aa).

The helical transmembrane segment at 8 to 28 (LFLALILSMGIWMGVNYFFFP) threads the bilayer. Polar residues predominate over residues 33–57 (KKNTETKQTQSDKTSENTKQQITSG). A disordered region spans residues 33 to 68 (KKNTETKQTQSDKTSENTKQQITSGKTKESNSADPV). A compositionally biased stretch (basic and acidic residues) spans 58–68 (KTKESNSADPV). A run of 4 helical transmembrane segments spans residues 417–437 (FTIPNYGWSIIIFAILFKLVF), 488–508 (VGGCLPMVIQIPIFIALYTAF), 536–556 (AIPYFTQTGIGLNLLALLMVG), and 575–595 (MLMYVMPVMMLYIFWNMPSGV).

It belongs to the OXA1/ALB3/YidC family. Type 1 subfamily. Interacts with the Sec translocase complex via SecD. Specifically interacts with transmembrane segments of nascent integral membrane proteins during membrane integration.

The protein resides in the cell inner membrane. In terms of biological role, required for the insertion and/or proper folding and/or complex formation of integral membrane proteins into the membrane. Involved in integration of membrane proteins that insert both dependently and independently of the Sec translocase complex, as well as at least some lipoproteins. Aids folding of multispanning membrane proteins. This Leptospira interrogans serogroup Icterohaemorrhagiae serovar Lai (strain 56601) protein is Membrane protein insertase YidC.